A 225-amino-acid chain; its full sequence is NAD(P)H-quinone oxidoreductase subunit K, chloroplastic (225 aa).

[4Fe-4S] cluster-binding residues include Cys-43, Cys-44, Cys-108, and Cys-139.

It belongs to the complex I 20 kDa subunit family. In terms of assembly, NDH is composed of at least 16 different subunits, 5 of which are encoded in the nucleus. [4Fe-4S] cluster serves as cofactor.

It is found in the plastid. The protein localises to the chloroplast thylakoid membrane. The enzyme catalyses a plastoquinone + NADH + (n+1) H(+)(in) = a plastoquinol + NAD(+) + n H(+)(out). It catalyses the reaction a plastoquinone + NADPH + (n+1) H(+)(in) = a plastoquinol + NADP(+) + n H(+)(out). Functionally, NDH shuttles electrons from NAD(P)H:plastoquinone, via FMN and iron-sulfur (Fe-S) centers, to quinones in the photosynthetic chain and possibly in a chloroplast respiratory chain. The immediate electron acceptor for the enzyme in this species is believed to be plastoquinone. Couples the redox reaction to proton translocation, and thus conserves the redox energy in a proton gradient. The polypeptide is NAD(P)H-quinone oxidoreductase subunit K, chloroplastic (Eucalyptus globulus subsp. globulus (Tasmanian blue gum)).